The chain runs to 161 residues: Cyclic pyranopterin monophosphate synthase (161 aa).

Residues 75 to 77 (LCH) and 113 to 114 (ME) each bind substrate. Residue D128 is part of the active site.

The protein belongs to the MoaC family. Homohexamer; trimer of dimers.

The catalysed reaction is (8S)-3',8-cyclo-7,8-dihydroguanosine 5'-triphosphate = cyclic pyranopterin phosphate + diphosphate. The protein operates within cofactor biosynthesis; molybdopterin biosynthesis. Functionally, catalyzes the conversion of (8S)-3',8-cyclo-7,8-dihydroguanosine 5'-triphosphate to cyclic pyranopterin monophosphate (cPMP). This chain is Cyclic pyranopterin monophosphate synthase, found in Erwinia tasmaniensis (strain DSM 17950 / CFBP 7177 / CIP 109463 / NCPPB 4357 / Et1/99).